The primary structure comprises 78 residues: Acyl carrier protein (78 aa).

The Carrier domain maps to 1–76; that stretch reads MALFEDIQAV…DVVKYIEDNK (76 aa). Ser36 is modified (O-(pantetheine 4'-phosphoryl)serine).

The protein belongs to the acyl carrier protein (ACP) family. In terms of processing, 4'-phosphopantetheine is transferred from CoA to a specific serine of apo-ACP by AcpS. This modification is essential for activity because fatty acids are bound in thioester linkage to the sulfhydryl of the prosthetic group.

The protein localises to the cytoplasm. It functions in the pathway lipid metabolism; fatty acid biosynthesis. Carrier of the growing fatty acid chain in fatty acid biosynthesis. This chain is Acyl carrier protein, found in Helicobacter pylori (strain J99 / ATCC 700824) (Campylobacter pylori J99).